Consider the following 358-residue polypeptide: Ganglioside-induced differentiation-associated protein 1 (358 aa).

The region spanning 24–105 is the GST N-terminal domain; it reads VKLILYHWTH…YLEQTFLDER (82 aa). Residues Lys-50, Lys-172, Lys-173, Lys-188, and Lys-190 each participate in a glycyl lysine isopeptide (Lys-Gly) (interchain with G-Cter in ubiquitin) cross-link. In terms of domain architecture, GST C-terminal spans 153–309; sequence PAYATTRIRS…LISAVLPTAF (157 aa). Lys-203 is modified (N6-acetyllysine; alternate). A Glycyl lysine isopeptide (Lys-Gly) (interchain with G-Cter in ubiquitin); alternate cross-link involves residue Lys-203. Glycyl lysine isopeptide (Lys-Gly) (interchain with G-Cter in ubiquitin) cross-links involve residues Lys-206, Lys-207, and Lys-214. 2 helical membrane-spanning segments follow: residues 292-312 and 320-340; these read VLGHVNNILISAVLPTAFRVA and LGTTLVVGLLAGVGYFAFMLF. The segment at 320 to 358 is required for mitochondrial localization; the sequence is LGTTLVVGLLAGVGYFAFMLFRKRLGSMILAFRPRPNYF.

It belongs to the GST superfamily. Homodimer. Post-translationally, ubiquitinated by PRKN during mitophagy, leading to its degradation and enhancement of mitophagy. Deubiquitinated by USP30. In terms of tissue distribution, highly expressed in whole brain and spinal cord. Predominant expression in central tissues of the nervous system not only in neurons but also in Schwann cells.

The protein resides in the mitochondrion outer membrane. It localises to the cytoplasm. Regulates the mitochondrial network by promoting mitochondrial fission. The protein is Ganglioside-induced differentiation-associated protein 1 (GDAP1) of Homo sapiens (Human).